We begin with the raw amino-acid sequence, 787 residues long: Pyridoxal-dependent decarboxylase domain-containing protein 1 (787 aa).

The span at 29–41 (EDSQRRTEEENGK) shows a compositional bias: basic and acidic residues. Residues 29–52 (EDSQRRTEEENGKKLLSGDIPGPL) form a disordered region. A Phosphoserine modification is found at serine 653. The disordered stretch occupies residues 683–787 (QGSGVTPPQT…PQVEEPESLR (105 aa)). Positions 685–697 (SGVTPPQTPTGTR) are enriched in polar residues. Threonine 688 and threonine 692 each carry phosphothreonine. 3 positions are modified to phosphoserine: serine 711, serine 719, and serine 723. Positions 735–745 (QSSGGQEASEA) are enriched in polar residues. Serine 747 and serine 785 each carry phosphoserine. Residues 774–787 (QDDRPQVEEPESLR) show a composition bias toward basic and acidic residues.

The protein belongs to the group II decarboxylase family. Requires pyridoxal 5'-phosphate as cofactor.

The chain is Pyridoxal-dependent decarboxylase domain-containing protein 1 (PDXDC1) from Bos taurus (Bovine).